We begin with the raw amino-acid sequence, 886 residues long: Isoleucine--tRNA ligase (886 aa).

Positions 60-70 (PYANGDIHIGH) match the 'HIGH' region motif. An L-isoleucyl-5'-AMP-binding site is contributed by glutamate 546. The 'KMSKS' region motif lies at 587–591 (KMSKS). Lysine 590 contacts ATP. Zn(2+) contacts are provided by cysteine 856, cysteine 859, cysteine 870, and cysteine 873.

The protein belongs to the class-I aminoacyl-tRNA synthetase family. IleS type 1 subfamily. Monomer. The cofactor is Zn(2+).

It localises to the cytoplasm. It carries out the reaction tRNA(Ile) + L-isoleucine + ATP = L-isoleucyl-tRNA(Ile) + AMP + diphosphate. Catalyzes the attachment of isoleucine to tRNA(Ile). As IleRS can inadvertently accommodate and process structurally similar amino acids such as valine, to avoid such errors it has two additional distinct tRNA(Ile)-dependent editing activities. One activity is designated as 'pretransfer' editing and involves the hydrolysis of activated Val-AMP. The other activity is designated 'posttransfer' editing and involves deacylation of mischarged Val-tRNA(Ile). The protein is Isoleucine--tRNA ligase of Mesomycoplasma hyopneumoniae (strain 7448) (Mycoplasma hyopneumoniae).